Here is a 302-residue protein sequence, read N- to C-terminus: Sulfate adenylyltransferase subunit 2 (302 aa).

The tract at residues 280–302 (RQGRAIDHDQSGSMELKKRQGYF) is disordered.

The protein belongs to the PAPS reductase family. CysD subfamily. Heterodimer composed of CysD, the smaller subunit, and CysN.

It carries out the reaction sulfate + ATP + H(+) = adenosine 5'-phosphosulfate + diphosphate. The protein operates within sulfur metabolism; hydrogen sulfide biosynthesis; sulfite from sulfate: step 1/3. Functionally, with CysN forms the ATP sulfurylase (ATPS) that catalyzes the adenylation of sulfate producing adenosine 5'-phosphosulfate (APS) and diphosphate, the first enzymatic step in sulfur assimilation pathway. APS synthesis involves the formation of a high-energy phosphoric-sulfuric acid anhydride bond driven by GTP hydrolysis by CysN coupled to ATP hydrolysis by CysD. The protein is Sulfate adenylyltransferase subunit 2 of Vibrio atlanticus (strain LGP32) (Vibrio splendidus (strain Mel32)).